Here is a 479-residue protein sequence, read N- to C-terminus: Glutamate--tRNA ligase (479 aa).

The 'HIGH' region signature appears at 21–31 (PSPTGYLHVGG). The 'KMSKS' region motif lies at 248 to 252 (KLSKR). ATP is bound at residue K251.

The protein belongs to the class-I aminoacyl-tRNA synthetase family. Glutamate--tRNA ligase type 1 subfamily. As to quaternary structure, monomer.

It localises to the cytoplasm. It catalyses the reaction tRNA(Glu) + L-glutamate + ATP = L-glutamyl-tRNA(Glu) + AMP + diphosphate. Functionally, catalyzes the attachment of glutamate to tRNA(Glu) in a two-step reaction: glutamate is first activated by ATP to form Glu-AMP and then transferred to the acceptor end of tRNA(Glu). This chain is Glutamate--tRNA ligase, found in Actinobacillus pleuropneumoniae serotype 5b (strain L20).